Consider the following 203-residue polypeptide: MVKVKICGLRRLEDIYYANQLQPDFIGFVFSESKRRVDLKEALEFVKRLKEGIKKVGVFVNEPVEKVMEIAEKLKLDVLQFHGDETQEYIDNFKNFTVWKAIRIRSKLDLKKTGEFKVDAFLFDSFSEKGYGGTGEAFDWNILKAYKREIPVVLSGGLKEENVEEAIKLVRPYAVDVSSGVEVGGYKDFNKMKSFIEKVRGVV.

Belongs to the TrpF family.

The catalysed reaction is N-(5-phospho-beta-D-ribosyl)anthranilate = 1-(2-carboxyphenylamino)-1-deoxy-D-ribulose 5-phosphate. It functions in the pathway amino-acid biosynthesis; L-tryptophan biosynthesis; L-tryptophan from chorismate: step 3/5. In Caldanaerobacter subterraneus subsp. tengcongensis (strain DSM 15242 / JCM 11007 / NBRC 100824 / MB4) (Thermoanaerobacter tengcongensis), this protein is N-(5'-phosphoribosyl)anthranilate isomerase.